Here is a 204-residue protein sequence, read N- to C-terminus: NADH-ubiquinone oxidoreductase subunit 9 (204 aa).

The protein belongs to the complex I 30 kDa subunit family. In terms of assembly, complex I is composed of about 30 different subunits.

The protein resides in the mitochondrion inner membrane. It catalyses the reaction a ubiquinone + NADH + 5 H(+)(in) = a ubiquinol + NAD(+) + 4 H(+)(out). In terms of biological role, core subunit of the mitochondrial membrane respiratory chain NADH dehydrogenase (Complex I) that is believed to belong to the minimal assembly required for catalysis. Complex I functions in the transfer of electrons from NADH to the respiratory chain. The immediate electron acceptor for the enzyme is believed to be ubiquinone. This is NADH-ubiquinone oxidoreductase subunit 9 (NAD9) from Reclinomonas americana.